The following is a 408-amino-acid chain: Na(+)-translocating NADH-quinone reductase subunit F (408 aa).

Residues 4–24 (IYLGVGMFTIIVLVLVAIIMF) traverse the membrane as a helical segment. Residues 33 to 127 (GDVEILINDD…DMEIELPEEV (95 aa)) enclose the 2Fe-2S ferredoxin-type domain. Residues C70, C76, C79, and C111 each coordinate [2Fe-2S] cluster. The 141-residue stretch at 130–270 (IRKWDCTVKS…SGPFGEFFAK (141 aa)) folds into the FAD-binding FR-type domain.

This sequence belongs to the NqrF family. As to quaternary structure, composed of six subunits; NqrA, NqrB, NqrC, NqrD, NqrE and NqrF. [2Fe-2S] cluster is required as a cofactor. FAD serves as cofactor.

The protein resides in the cell inner membrane. The catalysed reaction is a ubiquinone + n Na(+)(in) + NADH + H(+) = a ubiquinol + n Na(+)(out) + NAD(+). Its function is as follows. NQR complex catalyzes the reduction of ubiquinone-1 to ubiquinol by two successive reactions, coupled with the transport of Na(+) ions from the cytoplasm to the periplasm. The first step is catalyzed by NqrF, which accepts electrons from NADH and reduces ubiquinone-1 to ubisemiquinone by a one-electron transfer pathway. This is Na(+)-translocating NADH-quinone reductase subunit F from Idiomarina loihiensis (strain ATCC BAA-735 / DSM 15497 / L2-TR).